The primary structure comprises 757 residues: Mitofusin-2 (757 aa).

Residues 1 to 604 (MSLLFSRCNS…TQEEFMVSMV (604 aa)) lie on the Cytoplasmic side of the membrane. A part of a helix bundle domain, formed by helices from N-terminal and C-terminal regions region spans residues 30-94 (KHFVTAKKKI…VRGISEVLAR (65 aa)). The Dynamin-type G domain occupies 93-342 (ARRHMKVAFF…VRMFEFQNFE (250 aa)). A G1 motif region spans residues 103 to 110 (GRTSNGKS). 106–111 (SNGKST) contributes to the GTP binding site. Thr-111 is modified (phosphothreonine; by PINK1). Positions 129–130 (TT) are G2 motif. Positions 199-202 (DSPG) are G3 motif. Position 258–261 (258–261 (NRWD)) interacts with GTP. A G4 motif region spans residues 258 to 261 (NRWD). Glu-288 is a region of interest (G5 motif). Residues Ser-305 and Lys-307 each coordinate GTP. The part of a helix bundle domain, formed by helices from N-terminal and C-terminal regions stretch occupies residues 359–385 (EQHTVRAKQIAEAVRLIMDSLHMAARE). A coiled-coil region spans residues 391–434 (EEMREERQDRLKFIDKQLELLAQDYKLRIKQITEEVERQVSTAM). At Ser-442 the chain carries Phosphoserine; by PINK1. Residues 605 to 625 (TGLASLTSRTSMGILVVGGVV) form a helical membrane-spanning segment. Trp-626 is a topological domain (mitochondrial intermembrane). A helical transmembrane segment spans residues 627-647 (KAVGWRLIALSFGLYGLLYVY). Residues 648 to 757 (ERLTWTTKAK…FTHQYLQPSR (110 aa)) lie on the Cytoplasmic side of the membrane. Residues 695–738 (TFAHLCQQVDVTRENLEQEIAAMNKKIEVLDSLQSKAKLLRNKA) adopt a coiled-coil conformation. The segment at 722–753 (EVLDSLQSKAKLLRNKAGWLDSELNMFTHQYL) is part of a helix bundle domain, formed by helices from N-terminal and C-terminal regions.

It belongs to the TRAFAC class dynamin-like GTPase superfamily. Dynamin/Fzo/YdjA family. Mitofusin subfamily. Forms homomultimers and heteromultimers with MFN1. Oligomerization is essential for mitochondrion fusion. Interacts with VAT1. Interacts with STOML2; may form heterooligomers. Interacts (phosphorylated) with PRKN. Interacts with EIF2AK3. Interacts with THG1L; THG1L probably functions as a guanyl-nucleotide exchange factor/GEF, activating MFN2. In terms of processing, phosphorylated by PINK1. Ubiquitinated by non-degradative ubiquitin by PRKN, promoting mitochondrial fusion; deubiquitination by USP30 inhibits mitochondrial fusion. Ubiquitinated by HUWE1 when dietary stearate (C18:0) levels are low; ubiquitination inhibits mitochondrial fusion. Ubiquitous; expressed at low level. Highly expressed in heart and kidney.

It is found in the mitochondrion outer membrane. It carries out the reaction GTP + H2O = GDP + phosphate + H(+). Mitochondrial outer membrane GTPase that mediates mitochondrial clustering and fusion. Mitochondria are highly dynamic organelles, and their morphology is determined by the equilibrium between mitochondrial fusion and fission events. Overexpression induces the formation of mitochondrial networks. Membrane clustering requires GTPase activity and may involve a major rearrangement of the coiled coil domains. Plays a central role in mitochondrial metabolism and may be associated with obesity and/or apoptosis processes. Plays an important role in the regulation of vascular smooth muscle cell proliferation. Involved in the clearance of damaged mitochondria via selective autophagy (mitophagy). Is required for PRKN recruitment to dysfunctional mitochondria. Involved in the control of unfolded protein response (UPR) upon ER stress including activation of apoptosis and autophagy during ER stress. Acts as an upstream regulator of EIF2AK3 and suppresses EIF2AK3 activation under basal conditions. The sequence is that of Mitofusin-2 from Homo sapiens (Human).